The primary structure comprises 444 residues: Orexin receptor type 2 (444 aa).

A compositionally biased stretch (basic and acidic residues) spans 1 to 10 (MSGTKLEDSP). The segment at 1-30 (MSGTKLEDSPPCRNWSSAPELNETQEPFLN) is disordered. Residues 1-54 (MSGTKLEDSPPCRNWSSAPELNETQEPFLNPTDYDDEEFLRYLWREYLHPKEYE) lie on the Extracellular side of the membrane. N-linked (GlcNAc...) asparagine glycans are attached at residues Asn-14 and Asn-22. A compositionally biased stretch (polar residues) spans 14–27 (NWSSAPELNETQEP). The interval 33–49 (DYDDEEFLRYLWREYLH) is required for response to orexin-A. Residues 55–75 (WVLIAGYIIVFVVALIGNVLV) traverse the membrane as a helical segment. Topologically, residues 76–88 (CVAVWKNHHMRTV) are cytoplasmic. Residues 89-110 (TNYFIVNLSLADVLVTITCLPA) traverse the membrane as a helical segment. Topologically, residues 111-127 (TLVVDITETWFFGQSLC) are extracellular. A disulfide bond links Cys-127 and Cys-210. A helical transmembrane segment spans residues 128–150 (KVIPYLQTVSVSVSVLTLSCIAL). Residues 151–170 (DRWYAICHPLMFKSTAKRAR) lie on the Cytoplasmic side of the membrane. The helical transmembrane segment at 171–191 (NSIVIIWIVSCIIMIPQAIVM) threads the bilayer. The Extracellular segment spans residues 192–222 (ECSTMLPGLANKTTLFTVCDERWGGEIYPKM). Residue Asn-202 is glycosylated (N-linked (GlcNAc...) asparagine). Residues 223–243 (YHICFFLVTYMAPLCLMVLAY) traverse the membrane as a helical segment. At 244-304 (LQIFRKLWCR…QIRARRKTAR (61 aa)) the chain is on the cytoplasmic side. Residues 305-326 (MLMVVLLVFAICYLPISILNVL) traverse the membrane as a helical segment. Residues 327 to 342 (KRVFGMFTHTEDRETV) lie on the Extracellular side of the membrane. The helical transmembrane segment at 343-366 (YAWFTFSHWLVYANSAANPIIYNF) threads the bilayer. Over 367–444 (LSGKFREEFK…ANGAGQLQNW (78 aa)) the chain is Cytoplasmic.

It belongs to the G-protein coupled receptor 1 family.

Its subcellular location is the cell membrane. Functionally, nonselective, high-affinity receptor for both orexin-A and orexin-B neuropeptides. Triggers an increase in cytoplasmic Ca(2+) levels in response to orexin-A binding. This Sus scrofa (Pig) protein is Orexin receptor type 2 (HCRTR2).